We begin with the raw amino-acid sequence, 1285 residues long: Tat-binding homolog 7 (1285 aa).

Disordered stretches follow at residues 1 to 95, 121 to 173, 224 to 243, and 258 to 359; these read MARS…LTYR, MSDD…RTRR, GREE…EKEQ, and QEDE…ERGR. Composition is skewed to acidic residues over residues 226–237 and 258–270; these read EEEEEGDEEEAE and QEDE…ESSE. Positions 311–325 are enriched in basic residues; that stretch reads NRHHRNRNTSNRRRR. 446-453 contributes to the ATP binding site; the sequence is GPPGTGKT. Positions 928–1032 constitute a Bromo domain; it reads ALQRQMRMFF…NTFRDAIDDM (105 aa). A disordered region spans residues 1100 to 1196; that stretch reads EKLKEKLGIS…PTIQSSSSQE (97 aa). The span at 1136-1149 shows a compositional bias: basic residues; that stretch reads KLNKKKKDQKRNKK. The segment covering 1155 to 1175 has biased composition (acidic residues); it reads PDGDDTEETEEAVAENNVDAD.

The protein belongs to the AAA ATPase family.

In terms of biological role, thought to form a complex that enhances transcription from repetitive DNA sequences by modulating chromatin structure. The chain is Tat-binding homolog 7 from Caenorhabditis briggsae.